Here is a 130-residue protein sequence, read N- to C-terminus: RutC family protein HI_0719 (130 aa).

Residue C109 is part of the active site.

It belongs to the RutC family. As to quaternary structure, homotrimer.

This is RutC family protein HI_0719 from Haemophilus influenzae (strain ATCC 51907 / DSM 11121 / KW20 / Rd).